Here is a 432-residue protein sequence, read N- to C-terminus: Polyamine export protein (432 aa).

Residues 1–201 form the CNNM transmembrane domain; sequence MIMELFHTIL…AEAGVLKTQE (201 aa). The next 4 helical transmembrane spans lie at 2–22, 61–81, 100–120, and 138–158; these read IMEL…SAVV, FITV…GIGE, WIAP…FILF, and LSVV…VWFF. 2 consecutive CBS domains span residues 220 to 279 and 286 to 345; these read MTTR…NENV and LLRK…SNEE.

It belongs to the UPF0053 family. PaeA subfamily.

It localises to the cell inner membrane. Its function is as follows. Involved in cadaverine and putrescine tolerance in stationary phase. May facilitate the efflux of both cadaverine and putrescine from the cytoplasm, reducing potentially toxic levels under certain stress conditions. This Haemophilus influenzae (strain ATCC 51907 / DSM 11121 / KW20 / Rd) protein is Polyamine export protein.